The sequence spans 75 residues: Serine rich endogenous peptide 4 (75 aa).

The signal sequence occupies residues 1 to 31 (MATKTSNLGHLLLSLFILLLFILSQVGVAQA). Positions 51–75 (PPPLRGIVKPPIASFHSASPKDKGP) are disordered. Positions 61–75 (PIASFHSASPKDKGP) match the SCOOP motif motif. A SxS motif essential for MIK2 binding motif is present at residues 67-69 (SAS).

Belongs to the serine rich endogenous peptide (SCOOP) phytocytokine family. As to quaternary structure, interacts with MIK2 (via extracellular leucine-rich repeat domain); this interaction triggers the formation of complex between MIK2 and the BAK1/SERK3 and SERK4 coreceptors, and subsequent BAK1 activation by phosphorylation. As to expression, mostly expressed in leaves and seedlings shoots, and, to a lower extent, in roots, stems, siliques, seeds and flowers.

It is found in the cell membrane. The protein resides in the secreted. It localises to the extracellular space. The protein localises to the apoplast. In terms of biological role, brassicaceae-specific phytocytokine (plant endogenous peptide released into the apoplast) perceived by MIK2 in a BAK1/SERK3 and SERK4 coreceptors-dependent manner, that modulates various physiological and antimicrobial processes including growth prevention and reactive oxygen species (ROS) response regulation. Inhibits root growth. Prevents general growth and development. Exhibits antibacterial effects against Pseudomonas syringae pv. tomato DC3000, Ralstonia solanacearum, Bacillus subtilis and Agrobacterium tumefaciens, thus being an antimicrobial peptide (AMP). The chain is Serine rich endogenous peptide 4 from Arabidopsis thaliana (Mouse-ear cress).